The sequence spans 89 residues: Small ribosomal subunit protein uS15 (89 aa).

Belongs to the universal ribosomal protein uS15 family. Part of the 30S ribosomal subunit. Forms a bridge to the 50S subunit in the 70S ribosome, contacting the 23S rRNA.

Its function is as follows. One of the primary rRNA binding proteins, it binds directly to 16S rRNA where it helps nucleate assembly of the platform of the 30S subunit by binding and bridging several RNA helices of the 16S rRNA. In terms of biological role, forms an intersubunit bridge (bridge B4) with the 23S rRNA of the 50S subunit in the ribosome. This Escherichia coli O157:H7 protein is Small ribosomal subunit protein uS15.